A 98-amino-acid chain; its full sequence is MSEQKLRIGEIRYEVFDDYDPLTEEYLGKNLANAYFIAQIKKENVVQVGNRKINYSSDVKIGFDAFGEETKEKIKEYLLAAYSLIAEGAKDDGLVEYL.

In Bacillus subtilis (strain 168), this protein is SPbeta prophage-derived uncharacterized protein YorB (yorB).